The sequence spans 269 residues: MAQRSRVTLPQLQAMKERGERITMVTAYDYPSSLLADRAGMDMILVGDSLGMVVLGYSSTVPVTMDEMIHHTKAVVRANPAALVVADLPFLSYQTSVPDAVYNAGRLIKEGGADAVKLEGGQAVVPTVRAIVNAGIPVMGHLGLTPQSAVQLGGFRVQGRSEAEGEKIAADAAALVEAGVFALVLECVPADLARRITAALPVPTIGIGAGPDCDGQVLVYHDLLGLFDRFRPKFVKQYANLAEATVAALEKYRDEVRQGKFPDQEHSFK.

The Mg(2+) site is built by Asp-48 and Asp-87. Residues Asp-48–Ser-49, Asp-87, and Lys-117 each bind 3-methyl-2-oxobutanoate. Glu-119 lines the Mg(2+) pocket. Glu-186 (proton acceptor) is an active-site residue.

The protein belongs to the PanB family. As to quaternary structure, homodecamer; pentamer of dimers. Mg(2+) is required as a cofactor.

Its subcellular location is the cytoplasm. It catalyses the reaction 3-methyl-2-oxobutanoate + (6R)-5,10-methylene-5,6,7,8-tetrahydrofolate + H2O = 2-dehydropantoate + (6S)-5,6,7,8-tetrahydrofolate. Its pathway is cofactor biosynthesis; (R)-pantothenate biosynthesis; (R)-pantoate from 3-methyl-2-oxobutanoate: step 1/2. Catalyzes the reversible reaction in which hydroxymethyl group from 5,10-methylenetetrahydrofolate is transferred onto alpha-ketoisovalerate to form ketopantoate. This Moorella thermoacetica (strain ATCC 39073 / JCM 9320) protein is 3-methyl-2-oxobutanoate hydroxymethyltransferase.